The chain runs to 282 residues: Ammonia transport outward protein 2 (282 aa).

Residues 1–34 (MSDREQSSGNTAFENPKALDSSEGEFISENNDQS) are disordered. Residue S2 is modified to N-acetylserine. Phosphoserine occurs at positions 2, 7, 21, 22, 28, and 40. The Extracellular portion of the chain corresponds to 2 to 86 (SDREQSSGNT…GLAPAPVHKF (85 aa)). A helical transmembrane segment spans residues 87–107 (ANPAPLGLSGFALTTFVLSMF). The Cytoplasmic segment spans residues 108–119 (NARAQGITIPNV). Residues 120 to 140 (VVGCAMFYGGLVQLIAGIWEI) traverse the membrane as a helical segment. Over 141–150 (ALENTFGGTA) the chain is Extracellular. Residues 151-171 (LCSFGGFWLSFGAIYIPWFGI) form a helical membrane-spanning segment. Residues 172–184 (LDAYKDKESDLGN) lie on the Cytoplasmic side of the membrane. The helical transmembrane segment at 185-205 (ALGFYLLGWALFTFGLSVCTM) threads the bilayer. At 206–207 (KS) the chain is on the extracellular side. Residues 208–228 (TIMFFALFFLLAVTFLLLSIA) form a helical membrane-spanning segment. Over 229–238 (NFTGEVGVTR) the chain is Cytoplasmic. A helical membrane pass occupies residues 239–259 (AGGVLGVIVAFIAWYNAYAGI). Topologically, residues 260 to 282 (ATRQNSYIMVHPFALPSNDKVFF) are extracellular.

It belongs to the acetate uptake transporter (AceTr) (TC 2.A.96) family.

It localises to the cell membrane. In terms of biological role, transporter protein required for ammonia export. Involved in acetate resistance. This Saccharomyces cerevisiae (strain ATCC 204508 / S288c) (Baker's yeast) protein is Ammonia transport outward protein 2 (ATO2).